The chain runs to 328 residues: DNA polymerase III subunit delta' (328 aa).

In terms of assembly, DNA polymerase III contains a core (composed of alpha, epsilon and theta chains) that associates with a tau subunit. This core dimerizes to form the POLIII' complex. PolIII' associates with the gamma complex (composed of gamma, delta, delta', psi and chi chains) and with the beta chain to form the complete DNA polymerase III complex.

It carries out the reaction DNA(n) + a 2'-deoxyribonucleoside 5'-triphosphate = DNA(n+1) + diphosphate. Functionally, DNA polymerase III is a complex, multichain enzyme responsible for most of the replicative synthesis in bacteria. This DNA polymerase also exhibits 3' to 5' exonuclease activity. This is DNA polymerase III subunit delta' (holB) from Pseudomonas aeruginosa (strain ATCC 15692 / DSM 22644 / CIP 104116 / JCM 14847 / LMG 12228 / 1C / PRS 101 / PAO1).